The following is a 308-amino-acid chain: Ribosomal RNA small subunit methyltransferase H (308 aa).

S-adenosyl-L-methionine-binding positions include 36–38 (GGH), Asp-55, Phe-82, Asp-103, and Gln-110.

The protein belongs to the methyltransferase superfamily. RsmH family.

Its subcellular location is the cytoplasm. The catalysed reaction is cytidine(1402) in 16S rRNA + S-adenosyl-L-methionine = N(4)-methylcytidine(1402) in 16S rRNA + S-adenosyl-L-homocysteine + H(+). In terms of biological role, specifically methylates the N4 position of cytidine in position 1402 (C1402) of 16S rRNA. The sequence is that of Ribosomal RNA small subunit methyltransferase H from Helicobacter pylori (strain ATCC 700392 / 26695) (Campylobacter pylori).